The primary structure comprises 230 residues: Ribonuclease 3 (230 aa).

The 121-residue stretch at 5 to 125 (YSRFYNILGY…VIGAIYLDSD (121 aa)) folds into the RNase III domain. Residue E40 coordinates Mg(2+). The active site involves D44. Positions 111 and 114 each coordinate Mg(2+). Residue E114 is part of the active site. Residues 153–223 (DSKSKLQEIL…AEKMIEMLSQ (71 aa)) form the DRBM domain.

This sequence belongs to the ribonuclease III family. As to quaternary structure, homodimer. Requires Mg(2+) as cofactor.

The protein resides in the cytoplasm. It carries out the reaction Endonucleolytic cleavage to 5'-phosphomonoester.. In terms of biological role, digests double-stranded RNA. Involved in the processing of primary rRNA transcript to yield the immediate precursors to the large and small rRNAs (23S and 16S). Processes some mRNAs, and tRNAs when they are encoded in the rRNA operon. Processes pre-crRNA and tracrRNA of type II CRISPR loci if present in the organism. The protein is Ribonuclease 3 of Francisella tularensis subsp. tularensis (strain WY96-3418).